Consider the following 483-residue polypeptide: Probable glycine dehydrogenase (decarboxylating) subunit 2 (483 aa).

At Lys-264 the chain carries N6-(pyridoxal phosphate)lysine.

This sequence belongs to the GcvP family. C-terminal subunit subfamily. The glycine cleavage system is composed of four proteins: P, T, L and H. In this organism, the P 'protein' is a heterodimer of two subunits. Requires pyridoxal 5'-phosphate as cofactor.

The enzyme catalyses N(6)-[(R)-lipoyl]-L-lysyl-[glycine-cleavage complex H protein] + glycine + H(+) = N(6)-[(R)-S(8)-aminomethyldihydrolipoyl]-L-lysyl-[glycine-cleavage complex H protein] + CO2. Its function is as follows. The glycine cleavage system catalyzes the degradation of glycine. The P protein binds the alpha-amino group of glycine through its pyridoxal phosphate cofactor; CO(2) is released and the remaining methylamine moiety is then transferred to the lipoamide cofactor of the H protein. The protein is Probable glycine dehydrogenase (decarboxylating) subunit 2 of Nitrosomonas eutropha (strain DSM 101675 / C91 / Nm57).